A 353-amino-acid polypeptide reads, in one-letter code: 2,4-diaminopentanoate dehydrogenase (353 aa).

The protein belongs to the DapB family. Homodimer.

It carries out the reaction (2R,4S)-2,4-diaminopentanoate + NAD(+) + H2O = (2R)-2-amino-4-oxopentanoate + NH4(+) + NADH + H(+). It catalyses the reaction (2R,4S)-2,4-diaminopentanoate + NADP(+) + H2O = (2R)-2-amino-4-oxopentanoate + NH4(+) + NADPH + H(+). With respect to regulation, inhibited by p-chloromercuribenzoate, iodoacetate and N-ethylmaleimide. Involved in the ornithine fermentation pathway. Catalyzes the oxidative deamination of (2R,4S)-2,4-diaminopentanoate (DAP) to yield 2-amino-4-ketopentanoate (AKP). The protein is 2,4-diaminopentanoate dehydrogenase of Acetoanaerobium sticklandii (strain ATCC 12662 / DSM 519 / JCM 1433 / CCUG 9281 / NCIMB 10654 / HF) (Clostridium sticklandii).